A 265-amino-acid polypeptide reads, in one-letter code: Probable enoyl-CoA hydratase 1, peroxisomal (265 aa).

Residue M1 is modified to N-acetylmethionine. Substrate is bound by residues 68–72 (SGVDL) and A112. Positions 263–265 (SKL) match the Microbody targeting signal motif.

This sequence belongs to the enoyl-CoA hydratase/isomerase family.

The protein localises to the peroxisome. It carries out the reaction a (3S)-3-hydroxyacyl-CoA = a (2E)-enoyl-CoA + H2O. The catalysed reaction is a 4-saturated-(3S)-3-hydroxyacyl-CoA = a (3E)-enoyl-CoA + H2O. Its pathway is lipid metabolism; fatty acid beta-oxidation. Its function is as follows. Straight-chain enoyl-CoA thioesters from C4 up to at least C16 are processed, although with decreasing catalytic rate. The sequence is that of Probable enoyl-CoA hydratase 1, peroxisomal from Arabidopsis thaliana (Mouse-ear cress).